The following is a 156-amino-acid chain: Egg-lysin (156 aa).

The signal sequence occupies residues 1–18 (MKLLVLCVFAMMATLAVS).

In terms of assembly, monomer. Homodimer. Molecules associate into dimers and then rapidly dissociate again. Interacts (as a monomer) with the egg vitelline layer protein VERL (via VERL repeats); each VERL chain can bind multiple copies of lysin. Sperm.

The protein resides in the cytoplasmic vesicle. It is found in the secretory vesicle. It localises to the acrosome lumen. Functionally, creates a 3 um hole in the egg vitelline layer through which the sperm passes. Does not have enzyme activity. Species-specific interaction between the sperm protein lysin and the egg protein VERL exposes a basic surface on lysin that may dissociate the egg vitelline layer via electrostatic repulsion. Plays a role in ensuring species-specific fertilization. The polypeptide is Egg-lysin (Haliotis cracherodii (Black abalone)).